The chain runs to 247 residues: Large ribosomal subunit protein uL24m (247 aa).

Residues 84–117 (FFRGDRIEVLVGKDKGKQGIVTQVIPERNWVIVE) enclose the KOW domain.

This sequence belongs to the universal ribosomal protein uL24 family. In terms of assembly, component of the mitochondrial ribosome large subunit (39S) which comprises a 16S rRNA and about 50 distinct proteins.

The protein localises to the mitochondrion. The sequence is that of Large ribosomal subunit protein uL24m (mRpL24) from Drosophila pseudoobscura pseudoobscura (Fruit fly).